The sequence spans 229 residues: Response regulator SaeR (229 aa).

One can recognise a Response regulatory domain in the interval 3 to 116 (HLLIVDDEKD…ELVLRTNNLL (114 aa)). D51 is subject to 4-aspartylphosphate. The ompR/PhoB-type DNA-binding region spans 128-227 (IEQLEFDGLV…VWGLGYKFER (100 aa)).

Phosphorylated by SaeS.

It localises to the cytoplasm. Member of the two-component regulatory system SaeR/SaeS. Probably functions as a transcriptional regulator via a specific DNA-binding domain, recognizing motifs near the promoter sequences of target genes. The sequence is that of Response regulator SaeR (saeR) from Staphylococcus epidermidis (strain ATCC 35984 / DSM 28319 / BCRC 17069 / CCUG 31568 / BM 3577 / RP62A).